A 413-amino-acid chain; its full sequence is Unsaturated 3S-rhamnoglycuronyl hydrolase (413 aa).

The signal sequence occupies residues 1 to 21; that stretch reads MNHTKLKLSAVALTLALGLSA. Residue cysteine 22 is the site of N-palmitoyl cysteine attachment. Cysteine 22 carries the S-diacylglycerol cysteine lipid modification. Aspartate 203 functions as the Proton donor in the catalytic mechanism.

This sequence belongs to the glycosyl hydrolase 105 family.

It localises to the cell membrane. Glucuronyl hydrolase involved in ulvan degradation. Ulvan is the main polysaccharide component of the Ulvales (green seaweed) cell wall. It is composed of disaccharide building blocks comprising 3-sulfated rhamnose (Rha3S) linked to D-glucuronic acid (GlcA), L-iduronic acid (IduA), or D-xylose (Xyl). Unsaturated 3S-rhamnoglycuronyl hydrolase works together with ulvan lyases to fully degrade the ulvan polymer, catalyzing specifically the cleavage of the unsaturated 4-deoxy-L-threo-hex-4-enopyranosiduronic acid (deltaUA) of the deltaUA-oligosaccharides deltaUA-Rha3S, deltaUA-Rha3S-IduA-Rha3S and deltaUA-Rha3S-Xyl-Rha3S, the end products of the ulvan lyase reaction. The polypeptide is Unsaturated 3S-rhamnoglycuronyl hydrolase (Alteromonas sp. (strain LOR)).